The following is a 129-amino-acid chain: Large ribosomal subunit protein bL17 (129 aa).

This sequence belongs to the bacterial ribosomal protein bL17 family. In terms of assembly, part of the 50S ribosomal subunit. Contacts protein L32.

The polypeptide is Large ribosomal subunit protein bL17 (Desulfotalea psychrophila (strain LSv54 / DSM 12343)).